Reading from the N-terminus, the 184-residue chain is GTPase RhebL1 (184 aa).

Residues 16 to 21, 32 to 38, Gly-63, 119 to 122, and 149 to 150 contribute to the GTP site; these read SVGKTS, LEGYDPT, NKAD, and SA. The Effector region signature appears at 35 to 43; it reads YDPTVENTY. Thr-38 is a binding site for Mg(2+). The residue at position 181 (Cys-181) is a Cysteine methyl ester. A lipid anchor (S-farnesyl cysteine) is attached at Cys-181. A propeptide spans 182–184 (removed in mature form); it reads YLM.

This sequence belongs to the small GTPase superfamily. Rheb family. Interacts with MTOR.

Its subcellular location is the endomembrane system. The protein localises to the cytoplasm. The catalysed reaction is GTP + H2O = GDP + phosphate + H(+). Functionally, binds GTP and exhibits intrinsic GTPase activity. May activate NF-kappa-B-mediated gene transcription. Promotes signal transduction through MTOR, activates RPS6KB1, and is a downstream target of the small GTPase-activating proteins TSC1 and TSC2. This Mus musculus (Mouse) protein is GTPase RhebL1 (Rhebl1).